The primary structure comprises 425 residues: Protein CLP1 homolog (425 aa).

ATP contacts are provided by residues glutamate 18, lysine 59, and 121–126; that span reads DVGKST.

It belongs to the Clp1 family. Clp1 subfamily.

It is found in the nucleus. Required for endonucleolytic cleavage during polyadenylation-dependent pre-mRNA 3'-end formation. This is Protein CLP1 homolog (cbc) from Drosophila pseudoobscura pseudoobscura (Fruit fly).